A 211-amino-acid polypeptide reads, in one-letter code: Arginine exporter protein ArgO (211 aa).

6 helical membrane-spanning segments follow: residues 1–21 (MISY…PLGP), 37–57 (LMIA…GIFG), 68–88 (LLAL…FGAL), 111–131 (IIAT…DTFV), 147–167 (WFAL…ALLA), and 179–199 (AQRI…FQLA).

It belongs to the LysE/ArgO transporter (TC 2.A.75) family.

It is found in the cell inner membrane. The catalysed reaction is L-arginine(in) = L-arginine(out). In terms of biological role, involved in the export of arginine. Important to control the intracellular level of arginine and the correct balance between arginine and lysine. The polypeptide is Arginine exporter protein ArgO (Salmonella schwarzengrund (strain CVM19633)).